A 393-amino-acid chain; its full sequence is Matrix metalloproteinase-23 (393 aa).

Topologically, residues 1–20 are cytoplasmic; it reads MGRGACVPSAASGAGDRARQ. Positions 1–81 are excised as a propeptide; the sequence is MGRGACVPSA…PHPPVPRRRR (81 aa). A helical; Signal-anchor for type II membrane protein membrane pass occupies residues 21–41; sequence LGAVLGALCLFPALVLLAWPG. Residues 42–393 lie on the Lumenal side of the membrane; it reads TPANGAGARV…TYSWRIRVRS (352 aa). The interval 60–79 is disordered; sequence TSGVLASGSLGPPHPPVPRR. 2 N-linked (GlcNAc...) asparagine glycosylation sites follow: N95 and N151. Residue H214 participates in Zn(2+) binding. E215 is a catalytic residue. The Zn(2+) site is built by H218 and H224. N235 carries an N-linked (GlcNAc...) asparagine glycan. The region spanning 258 to 292 is the ShKT domain; it reads CLDRLFVCASWARRGFCDTRRRLMKRLCPSSCDFC. 3 disulfides stabilise this stretch: C258–C292, C265–C285, and C274–C289. The region spanning 298–383 is the Ig-like C2-type domain; the sequence is PTVAATPPPP…VVRRRQRVLS (86 aa). N-linked (GlcNAc...) asparagine glycosylation is present at N319. An intrachain disulfide couples C324 to C373.

The protein belongs to the peptidase M10A family. Zn(2+) is required as a cofactor. In terms of processing, N-glycosylated. Proteolytic cleavage might yield an active form.

It localises to the membrane. Its subcellular location is the endoplasmic reticulum membrane. Protease. May regulate the surface expression of some potassium channels by retaining them in the endoplasmic reticulum. This is Matrix metalloproteinase-23 (MMP23) from Bos taurus (Bovine).